The sequence spans 314 residues: tRNA pseudouridine synthase B (314 aa).

Residue H43 participates in substrate binding. Residue D48 is the Nucleophile of the active site. Substrate-binding residues include Y76, Y179, and L200.

It belongs to the pseudouridine synthase TruB family. Type 1 subfamily.

The enzyme catalyses uridine(55) in tRNA = pseudouridine(55) in tRNA. In terms of biological role, responsible for synthesis of pseudouridine from uracil-55 in the psi GC loop of transfer RNAs. This Citrobacter koseri (strain ATCC BAA-895 / CDC 4225-83 / SGSC4696) protein is tRNA pseudouridine synthase B.